The primary structure comprises 496 residues: Adenosine transporter 1 (496 aa).

Over 1–26 the chain is Cytoplasmic; that stretch reads MSSHTSTPNHASAAPPRKWYDMTSAE. The helical transmembrane segment at 27 to 47 threads the bilayer; sequence FYVYVVAFMCGISMLMPINAV. Topologically, residues 48-77 are extracellular; it reads FSAPSYMLQYYLYATKDPNHVPQMTNFWSN. Residues 78 to 98 traverse the membrane as a helical segment; it reads VMTYYNLIGLVTGLVMEPLTL. Over 99-107 the chain is Cytoplasmic; the sequence is LKSFRKIPM. The chain crosses the membrane as a helical span at residues 108–128; sequence LVRLLGGLCILIVEIIVLMAV. Residues 129–135 are Extracellular-facing; that stretch reads PARGTTE. The helical transmembrane segment at 136 to 156 threads the bilayer; sequence GGAVATMCIAGFIGGLGKSIF. Residues 157–172 lie on the Cytoplasmic side of the membrane; it reads ESTVYGMFGAFPPSFT. The chain crosses the membrane as a helical span at residues 173 to 193; the sequence is SIMMGGVGISGVLTSLIQIIV. Topologically, residues 194 to 208 are extracellular; that stretch reads KAALPDTYEGVKKQS. The helical transmembrane segment at 209–229 threads the bilayer; it reads YIYYSLDVGIQAATFIALIMM. Topologically, residues 230–336 are cytoplasmic; sequence RFNSFAQLHF…SIISVLRSIK (107 aa). A helical transmembrane segment spans residues 337-357; that stretch reads WMFVSCAFVFVVTLFLFPGIA. The Extracellular portion of the chain corresponds to 358–365; sequence TGMFPESK. Residues 366–386 form a helical membrane-spanning segment; sequence WFATVAVFIFNCCDVLGRVAP. Residues 387–399 lie on the Cytoplasmic side of the membrane; it reads ALRFMWPRSYNQR. A helical transmembrane segment spans residues 400 to 420; sequence WIIVAASFARVIFVPLLLLYS. Topologically, residues 421 to 431 are extracellular; it reads YHYIPSEAYGY. The helical transmembrane segment at 432–452 threads the bilayer; it reads VIMVIFGFSSGYVASMSLTLG. The Cytoplasmic segment spans residues 453-464; the sequence is PQSKGIDNDGKR. A helical membrane pass occupies residues 465 to 485; it reads FVAGTLMGISILVGGTIGTVL. The Extracellular portion of the chain corresponds to 486 to 496; sequence SIMTQTIREKY.

This sequence belongs to the SLC29A/ENT transporter (TC 2.A.57) family.

The protein resides in the membrane. The catalysed reaction is adenosine(in) = adenosine(out). Adenosine transporter. This Crithidia fasciculata protein is Adenosine transporter 1.